The chain runs to 347 residues: Farnesyl pyrophosphate synthase ERG20 (347 aa).

3 residues coordinate isopentenyl diphosphate: Lys50, Arg53, and Gln88. Asp95 and Asp99 together coordinate Mg(2+). Position 104 (Arg104) interacts with dimethylallyl diphosphate. Arg105 contributes to the isopentenyl diphosphate binding site. The dimethylallyl diphosphate site is built by Lys192, Thr193, Gln232, Lys249, and Lys258.

Belongs to the FPP/GGPP synthase family. It depends on Mg(2+) as a cofactor.

The enzyme catalyses isopentenyl diphosphate + dimethylallyl diphosphate = (2E)-geranyl diphosphate + diphosphate. It carries out the reaction isopentenyl diphosphate + (2E)-geranyl diphosphate = (2E,6E)-farnesyl diphosphate + diphosphate. It functions in the pathway isoprenoid biosynthesis; farnesyl diphosphate biosynthesis; farnesyl diphosphate from geranyl diphosphate and isopentenyl diphosphate: step 1/1. The protein operates within isoprenoid biosynthesis; geranyl diphosphate biosynthesis; geranyl diphosphate from dimethylallyl diphosphate and isopentenyl diphosphate: step 1/1. Farnesyl pyrophosphate synthase; part of the second module of ergosterol biosynthesis pathway that includes the middle steps of the pathway. ERG20 catalyzes the sequential condensation of isopentenyl pyrophosphate with dimethylallyl pyrophosphate, and then with the resultant geranylpyrophosphate to the ultimate product farnesyl pyrophosphate. The second module is carried out in the vacuole and involves the formation of farnesyl diphosphate, which is also an important intermediate in the biosynthesis of ubiquinone, dolichol, heme and prenylated proteins. Activity by the mevalonate kinase ERG12 (FG05912) first converts mevalonate into 5-phosphomevalonate. 5-phosphomevalonate is then further converted to 5-diphosphomevalonate by the phosphomevalonate kinase ERG8 (FG09764). The diphosphomevalonate decarboxylase ERG19 (FG10424) then produces isopentenyl diphosphate. The isopentenyl-diphosphate delta-isomerase IDI1 (FG09722) then catalyzes the 1,3-allylic rearrangement of the homoallylic substrate isopentenyl (IPP) to its highly electrophilic allylic isomer, dimethylallyl diphosphate (DMAPP). Finally the farnesyl diphosphate synthase ERG20 (FG06784) catalyzes the sequential condensation of isopentenyl pyrophosphate with dimethylallyl pyrophosphate, and then with the resultant geranylpyrophosphate to the ultimate product farnesyl pyrophosphate. This Gibberella zeae (strain ATCC MYA-4620 / CBS 123657 / FGSC 9075 / NRRL 31084 / PH-1) (Wheat head blight fungus) protein is Farnesyl pyrophosphate synthase ERG20.